A 181-amino-acid chain; its full sequence is Probable pyruvoyl-dependent arginine decarboxylase (181 aa).

Serine 43 is subject to Pyruvic acid (Ser).

Belongs to the PdaD family. The cofactor is pyruvate.

The enzyme catalyses L-arginine + H(+) = agmatine + CO2. The sequence is that of Probable pyruvoyl-dependent arginine decarboxylase from Chlorobium limicola (strain DSM 245 / NBRC 103803 / 6330).